A 528-amino-acid polypeptide reads, in one-letter code: Probable rhamnogalacturonate lyase A (528 aa).

Residues 1 to 20 (MLSRTILFSTSFLWVRVANA) form the signal peptide. 2 cysteine pairs are disulfide-bonded: Cys-50/Cys-93 and Cys-184/Cys-193.

This sequence belongs to the polysaccharide lyase 4 family.

The protein localises to the secreted. It carries out the reaction Endotype eliminative cleavage of L-alpha-rhamnopyranosyl-(1-&gt;4)-alpha-D-galactopyranosyluronic acid bonds of rhamnogalacturonan I domains in ramified hairy regions of pectin leaving L-rhamnopyranose at the reducing end and 4-deoxy-4,5-unsaturated D-galactopyranosyluronic acid at the non-reducing end.. Pectinolytic enzymes consist of four classes of enzymes: pectin lyase, polygalacturonase, pectin methylesterase and rhamnogalacturonase. Degrades the rhamnogalacturonan I (RG-I) backbone of pectin. The chain is Probable rhamnogalacturonate lyase A (rglA) from Aspergillus flavus (strain ATCC 200026 / FGSC A1120 / IAM 13836 / NRRL 3357 / JCM 12722 / SRRC 167).